The chain runs to 252 residues: Ditrans,polycis-undecaprenyl-diphosphate synthase ((2E,6E)-farnesyl-diphosphate specific) (252 aa).

Asp-25 is an active-site residue. Asp-25 lines the Mg(2+) pocket. Substrate-binding positions include 26 to 29, Trp-30, Arg-38, His-42, and 70 to 72; these read GNGR and SSE. Asn-73 functions as the Proton acceptor in the catalytic mechanism. Substrate contacts are provided by Trp-74, Arg-76, and Arg-193. His-198 is a Mg(2+) binding site. Position 199 to 201 (199 to 201) interacts with substrate; the sequence is RIS. Glu-212 lines the Mg(2+) pocket.

This sequence belongs to the UPP synthase family. Homodimer. The cofactor is Mg(2+).

It carries out the reaction 8 isopentenyl diphosphate + (2E,6E)-farnesyl diphosphate = di-trans,octa-cis-undecaprenyl diphosphate + 8 diphosphate. Catalyzes the sequential condensation of isopentenyl diphosphate (IPP) with (2E,6E)-farnesyl diphosphate (E,E-FPP) to yield (2Z,6Z,10Z,14Z,18Z,22Z,26Z,30Z,34E,38E)-undecaprenyl diphosphate (di-trans,octa-cis-UPP). UPP is the precursor of glycosyl carrier lipid in the biosynthesis of bacterial cell wall polysaccharide components such as peptidoglycan and lipopolysaccharide. This is Ditrans,polycis-undecaprenyl-diphosphate synthase ((2E,6E)-farnesyl-diphosphate specific) from Salmonella typhi.